The sequence spans 294 residues: Nucleotide-binding protein Dde_1774 (294 aa).

14–21 (GLSGAGKS) serves as a coordination point for ATP. Residue 66–69 (DLRQ) participates in GTP binding.

This sequence belongs to the RapZ-like family.

Functionally, displays ATPase and GTPase activities. The chain is Nucleotide-binding protein Dde_1774 from Oleidesulfovibrio alaskensis (strain ATCC BAA-1058 / DSM 17464 / G20) (Desulfovibrio alaskensis).